We begin with the raw amino-acid sequence, 349 residues long: N-formyl peptide receptor 3 (349 aa).

Residues 1 to 27 lie on the Extracellular side of the membrane; that stretch reads METNFSIPLNETEEVLPEPAGHTVLWI. Residues asparagine 4 and asparagine 10 are each glycosylated (N-linked (GlcNAc...) asparagine). Residues 28-50 traverse the membrane as a helical segment; sequence FSLLVHGVTFIFGVLGNGLVIWV. Over 51–61 the chain is Cytoplasmic; the sequence is AGFRMTRTVNT. A helical membrane pass occupies residues 62 to 83; sequence ICYLNLALADFSFSAILPFHMV. Over 84-100 the chain is Extracellular; it reads SVAMREKWPFGTFLCKL. Cysteine 98 and cysteine 176 are joined by a disulfide. Residues 101 to 121 form a helical membrane-spanning segment; sequence VHVMIDINLFVSVYLITIIAL. Residues 122-140 are Cytoplasmic-facing; that stretch reads DRCICVLHPAWAQNHRTMS. Residues 141-162 traverse the membrane as a helical segment; that stretch reads LAKRVMTGLWILTIVLTLPNFI. The Extracellular portion of the chain corresponds to 163-205; sequence FWTTISTTNGDTYCIFNYPFWGDTVVERMNVFITMAKVSLILH. A helical transmembrane segment spans residues 206-226; it reads FIIGFSIPMSIITVCYGIIVA. Residues 227–242 lie on the Cytoplasmic side of the membrane; it reads KIHKKRMTKSSRPLHI. A helical membrane pass occupies residues 243 to 266; the sequence is FTAVVASFFICWFPYELTGILMAV. At 267–286 the chain is on the extracellular side; sequence WLKEILLNGKYKIILVLINP. A helical transmembrane segment spans residues 287–306; it reads TSSLAFFNSCLNPSLYVFMG. Over 307–349 the chain is Cytoplasmic; that stretch reads HNFQERLIRSLPTSLERALTEVPDSAQTSNTHTTSASPPEETE. Positions 327–349 are disordered; sequence EVPDSAQTSNTHTTSASPPEETE. Positions 331-343 are enriched in polar residues; sequence SAQTSNTHTTSAS.

It belongs to the G-protein coupled receptor 1 family.

Its subcellular location is the cell membrane. Functionally, low affinity receptor for N-formyl-methionyl peptides, which are powerful neutrophils chemotactic factors. Binding of FMLP to the receptor causes activation of neutrophils. This response is mediated via a G-protein that activates a phosphatidylinositol-calcium second messenger system. The protein is N-formyl peptide receptor 3 (FPR3) of Macaca mulatta (Rhesus macaque).